A 671-amino-acid chain; its full sequence is DNA ligase (671 aa).

Residues 31-35 (DAEYD), 80-81 (SL), and Glu-110 each bind NAD(+). Lys-112 serves as the catalytic N6-AMP-lysine intermediate. Positions 133, 167, 283, and 307 each coordinate NAD(+). Zn(2+) contacts are provided by Cys-401, Cys-404, Cys-419, and Cys-424. In terms of domain architecture, BRCT spans 587–671 (EEELVFAGKT…YLPDEGGLNE (85 aa)).

The protein belongs to the NAD-dependent DNA ligase family. LigA subfamily. The cofactor is Mg(2+). Mn(2+) is required as a cofactor.

The enzyme catalyses NAD(+) + (deoxyribonucleotide)n-3'-hydroxyl + 5'-phospho-(deoxyribonucleotide)m = (deoxyribonucleotide)n+m + AMP + beta-nicotinamide D-nucleotide.. Functionally, DNA ligase that catalyzes the formation of phosphodiester linkages between 5'-phosphoryl and 3'-hydroxyl groups in double-stranded DNA using NAD as a coenzyme and as the energy source for the reaction. It is essential for DNA replication and repair of damaged DNA. In Listeria innocua serovar 6a (strain ATCC BAA-680 / CLIP 11262), this protein is DNA ligase.